A 420-amino-acid polypeptide reads, in one-letter code: Putative kinase Y4mE (420 aa).

D302 acts as the Proton acceptor in catalysis.

This sequence belongs to the HipA Ser/Thr kinase family.

The sequence is that of Putative kinase Y4mE from Sinorhizobium fredii (strain NBRC 101917 / NGR234).